A 197-amino-acid polypeptide reads, in one-letter code: Holliday junction branch migration complex subunit RuvA (197 aa).

The interval 1–64 is domain I; it reads MIASIRGILI…EDSLTLYGFE (64 aa). The domain II stretch occupies residues 65–145; the sequence is TVEQRQLFET…GLPTGAAVTP (81 aa). Positions 146–148 are flexible linker; the sequence is AVA. Residues 148–197 are domain III; sequence AAANAELSEALISLGFTDAEAAAAIAALPSDAPPDLEERVRLALRYFSAS.

Belongs to the RuvA family. As to quaternary structure, homotetramer. Forms an RuvA(8)-RuvB(12)-Holliday junction (HJ) complex. HJ DNA is sandwiched between 2 RuvA tetramers; dsDNA enters through RuvA and exits via RuvB. An RuvB hexamer assembles on each DNA strand where it exits the tetramer. Each RuvB hexamer is contacted by two RuvA subunits (via domain III) on 2 adjacent RuvB subunits; this complex drives branch migration. In the full resolvosome a probable DNA-RuvA(4)-RuvB(12)-RuvC(2) complex forms which resolves the HJ.

The protein resides in the cytoplasm. Functionally, the RuvA-RuvB-RuvC complex processes Holliday junction (HJ) DNA during genetic recombination and DNA repair, while the RuvA-RuvB complex plays an important role in the rescue of blocked DNA replication forks via replication fork reversal (RFR). RuvA specifically binds to HJ cruciform DNA, conferring on it an open structure. The RuvB hexamer acts as an ATP-dependent pump, pulling dsDNA into and through the RuvAB complex. HJ branch migration allows RuvC to scan DNA until it finds its consensus sequence, where it cleaves and resolves the cruciform DNA. This is Holliday junction branch migration complex subunit RuvA from Roseiflexus sp. (strain RS-1).